Consider the following 918-residue polypeptide: Calcium-transporting ATPase type 2C member 1 (918 aa).

Residues 1–78 (MKVARFQKIP…EPLWKKYISQ (78 aa)) lie on the Cytoplasmic side of the membrane. Residues 79-95 (FKNPLIMLLLASAVISI) traverse the membrane as a helical segment. The Extracellular portion of the chain corresponds to 96–99 (LMRQ). Residues 100–121 (FDDAVSITVAIVIVVTVAFVQE) form a helical membrane-spanning segment. The Cytoplasmic portion of the chain corresponds to 122–262 (YRSEKSLEEL…PKTPLQKSMD (141 aa)). Residues 263–282 (LLGKQLSFYSFGIIGIIMLV) form a helical membrane-spanning segment. Over 283 to 294 (GWLLGKDILEMF) the chain is Extracellular. Residues 295 to 316 (TISVSLAVAAIPEGLPIVVTVT) traverse the membrane as a helical segment. Residues 317-699 (LALGVMRMVK…EGKGIYNNIK (383 aa)) are Cytoplasmic-facing. Residue aspartate 349 is the 4-aspartylphosphate intermediate of the active site. Positions 643 and 647 each coordinate Mg(2+). A helical membrane pass occupies residues 700-722 (NFVRFQLSTSIAALTLISLATLM). At 723 to 727 (NFPNP) the chain is on the extracellular side. Residues 728–751 (LNAMQILWINIIMDGPPAQSLGVE) form a helical membrane-spanning segment. At 752–775 (PVDKDVIRKPPRNWKDSILTKNLI) the chain is on the cytoplasmic side. Residues 776-794 (LKILVSSIIIVCGTLFVFW) traverse the membrane as a helical segment. Residues 795–801 (RELRDNV) lie on the Extracellular side of the membrane. The helical transmembrane segment at 802–827 (ITPRDTTMTFTCFVFFDMFNALSSRS) threads the bilayer. The Cytoplasmic segment spans residues 828–842 (QTKSVFEIGLCSNKM). Residues 843-862 (FCYAVLGSIMGQLLVIYFPP) traverse the membrane as a helical segment. Residues 863–875 (LQKVFQTESLSIL) are Extracellular-facing. The chain crosses the membrane as a helical span at residues 876–892 (DLLFLLGLTSSVCIVSE). The Cytoplasmic segment spans residues 893-918 (IIKKVERSREKVQKNAGSASSSFLEV).

The protein belongs to the cation transport ATPase (P-type) (TC 3.A.3) family. Type IIA subfamily. Monomer. Homodimer. As to expression, expressed in hippocampal neurons in the CA3 region of the Amon's horn (at protein level). Expressed in brain, heart, lung, stomach, liver, colon and mammary gland.

Its subcellular location is the golgi apparatus. The protein localises to the trans-Golgi network membrane. It localises to the golgi stack membrane. It carries out the reaction Ca(2+)(in) + ATP + H2O = Ca(2+)(out) + ADP + phosphate + H(+). The enzyme catalyses Mn(2+)(in) + ATP + H2O = Mn(2+)(out) + ADP + phosphate + H(+). Its function is as follows. ATP-driven pump that supplies the Golgi apparatus with Ca(2+) and Mn(2+) ions, both essential cofactors for processing and trafficking of newly synthesized proteins in the secretory pathway. Within a catalytic cycle, acquires Ca(2+) or Mn(2+) ions on the cytoplasmic side of the membrane and delivers them to the lumenal side. The transfer of ions across the membrane is coupled to ATP hydrolysis and is associated with a transient phosphorylation that shifts the pump conformation from inward-facing to outward-facing state. Plays a primary role in the maintenance of Ca(2+) homeostasis in the trans-Golgi compartment with a functional impact on Golgi and post-Golgi protein sorting as well as a structural impact on cisternae morphology. Responsible for loading the Golgi stores with Ca(2+) ions in keratinocytes, contributing to keratinocyte differentiation and epidermis integrity. Participates in Ca(2+) and Mn(2+) ions uptake into the Golgi store of hippocampal neurons and regulates protein trafficking required for neural polarity. May also play a role in the maintenance of Ca(2+) and Mn(2+) homeostasis and signaling in the cytosol while preventing cytotoxicity. The sequence is that of Calcium-transporting ATPase type 2C member 1 from Mus musculus (Mouse).